Here is a 298-residue protein sequence, read N- to C-terminus: MSKNKDQRTAKTLERTWDTLNHLLFISSCLYKLNLKSVAQITLSILAMIISTSLIIAAIIFIASANHKVTPTTAIIQDATSQIKNTTPTYLTQNPQLGISPSNPSEITSQITTILASTTPGVKSTLQSTTVKTKNTTTTQTQPSKPTTKQRQNKPPSKPNNDFHFEVFNFVPCSICSNNPTCWAICKRIPNKKPGKKTTTKPTKKPTLKTTKKDPKPQTTKSKEVPTTKPTEEPTINTTKTNIITTLLTSNTTGNPELTSQMETFHSTSSEGNPSPSQVSTTSEYPSQPSSPPNTPRQ.

Topologically, residues 1-42 (MSKNKDQRTAKTLERTWDTLNHLLFISSCLYKLNLKSVAQIT) are cytoplasmic. Residues 43 to 63 (LSILAMIISTSLIIAAIIFIA) traverse the membrane as a helical segment. Topologically, residues 64–298 (SANHKVTPTT…PSSPPNTPRQ (235 aa)) are extracellular. O-linked (GalNAc...) threonine; by host glycosylation is found at T70, T72, T80, T86, T87, and T92. S100 and S105 each carry an O-linked (GalNAc...) serine; by host glycan. T113 is a glycosylation site (O-linked (GalNAc...) threonine; by host). S117 carries an O-linked (GalNAc...) serine; by host glycan. T119 is a glycosylation site (O-linked (GalNAc...) threonine; by host). The span at 125–150 (TLQSTTVKTKNTTTTQTQPSKPTTKQ) shows a compositional bias: low complexity. Residues 125-161 (TLQSTTVKTKNTTTTQTQPSKPTTKQRQNKPPSKPNN) form a disordered region. The N-linked (GlcNAc...) asparagine; by host glycan is linked to N135. T137, T138, T139, and T141 each carry an O-linked (GalNAc...) threonine; by host glycan. Residue S144 is glycosylated (O-linked (GalNAc...) serine; by host). T147 carries an O-linked (GalNAc...) threonine; by host glycan. Cystine bridges form between C173–C186 and C176–C182. The interval 187–198 (KRIPNKKPGKKT) is binding to host heparan sulfate. The span at 190–207 (PNKKPGKKTTTKPTKKPT) shows a compositional bias: basic residues. The segment at 190 to 298 (PNKKPGKKTT…PSSPPNTPRQ (109 aa)) is disordered. 5 O-linked (GalNAc...) threonine; by host glycosylation sites follow: T199, T203, T219, T231, and T235. Residues 211 to 232 (TKKDPKPQTTKSKEVPTTKPTE) are compositionally biased toward basic and acidic residues. A compositionally biased stretch (low complexity) spans 233 to 253 (EPTINTTKTNIITTLLTSNTT). Residues N237 and N251 are each glycosylated (N-linked (GlcNAc...) asparagine; by host). T253 carries O-linked (GalNAc...) threonine; by host glycosylation. Polar residues predominate over residues 254 to 288 (GNPELTSQMETFHSTSSEGNPSPSQVSTTSEYPSQ). O-linked (GalNAc...) serine; by host glycosylation is present at S269. An O-linked (GlcNAc...) serine; by host glycan is attached at S270. S275 is a glycosylation site (O-linked (GalNAc...) serine; by host). T282 carries an O-linked (GalNAc...) threonine; by host glycan. O-linked (GalNAc...) serine; by host glycans are attached at residues S283, S287, and S290. Positions 289 to 298 (PSSPPNTPRQ) are enriched in pro residues.

Belongs to the pneumoviruses glycoprotein G family. Homooligomer. Interacts (via N-terminus) with protein M. Part of a complex composed of F1, F2 and G glycoproteins. Interacts with protein SH. Interacts with host heparate sulfate; this interaction probably participates in the viral attachment to the host cell. Interacts with host CX3CR1; this interaction plays an important role in viral entry. Interacts with the host lectins CD209/DC-SIGN and CD209L/L-SIGN on dendritic cells; these interactions stimulate the phosphorylation of MAPK3/ERK1 and MAPK1/ERK2, which inhibits dendritic cell activation and could participate in the limited immunity against RSV reinfection. In terms of processing, cleaved to give rise to the mature sG protein which lacks the transmembrane domain. N- and O-glycosylated. May carry 30-40 separate O-linked carbohydrate chains distributed among the 91 serine and threonine residues. Post-translationally, palmitoylated.

It is found in the virion membrane. Its subcellular location is the host cell membrane. It localises to the secreted. Functionally, attaches the virion to the host cell membrane by interacting with heparan sulfate, initiating the infection. Interacts with host CX3CR1, the receptor for the CX3C chemokine fractalkine, to modulate the immune response and facilitate infection. Unlike the other paramyxovirus attachment proteins, lacks both neuraminidase and hemagglutinating activities. Its function is as follows. Helps the virus escape antibody-dependent restriction of replication by acting as an antigen decoy and by modulating the activity of leukocytes bearing Fc-gamma receptors. The polypeptide is Major surface glycoprotein G (G) (Homo sapiens (Human)).